Here is a 660-residue protein sequence, read N- to C-terminus: Bifunctional polymyxin resistance protein ArnA (660 aa).

Positions 1–304 are formyltransferase ArnAFT; the sequence is MKAVIFAYHD…TLGLVAGARL (304 aa). The Proton donor; for formyltransferase activity role is filled by H104. Residues R114 and 136 to 140 each bind (6R)-10-formyltetrahydrofolate; that span reads VKRAD. The interval 314–660 is dehydrogenase ArnADH; the sequence is RRIRVLILGV…RSVDVAERAS (347 aa). Residues D347 and 368 to 369 contribute to the NAD(+) site; that span reads DI. UDP-alpha-D-glucuronate contacts are provided by residues A393, Y398, and 432 to 433; that span reads TS. The active-site Proton acceptor; for decarboxylase activity is the E434. Residues R460, N492, 526–535, and Y613 each bind UDP-alpha-D-glucuronate; that span reads KLIDGGQQKR. R619 serves as the catalytic Proton donor; for decarboxylase activity.

In the N-terminal section; belongs to the Fmt family. UDP-L-Ara4N formyltransferase subfamily. It in the C-terminal section; belongs to the NAD(P)-dependent epimerase/dehydratase family. UDP-glucuronic acid decarboxylase subfamily. In terms of assembly, homohexamer, formed by a dimer of trimers.

The enzyme catalyses UDP-alpha-D-glucuronate + NAD(+) = UDP-beta-L-threo-pentopyranos-4-ulose + CO2 + NADH. It carries out the reaction UDP-4-amino-4-deoxy-beta-L-arabinose + (6R)-10-formyltetrahydrofolate = UDP-4-deoxy-4-formamido-beta-L-arabinose + (6S)-5,6,7,8-tetrahydrofolate + H(+). The protein operates within nucleotide-sugar biosynthesis; UDP-4-deoxy-4-formamido-beta-L-arabinose biosynthesis; UDP-4-deoxy-4-formamido-beta-L-arabinose from UDP-alpha-D-glucuronate: step 1/3. It functions in the pathway nucleotide-sugar biosynthesis; UDP-4-deoxy-4-formamido-beta-L-arabinose biosynthesis; UDP-4-deoxy-4-formamido-beta-L-arabinose from UDP-alpha-D-glucuronate: step 3/3. It participates in bacterial outer membrane biogenesis; lipopolysaccharide biosynthesis. Its function is as follows. Bifunctional enzyme that catalyzes the oxidative decarboxylation of UDP-glucuronic acid (UDP-GlcUA) to UDP-4-keto-arabinose (UDP-Ara4O) and the addition of a formyl group to UDP-4-amino-4-deoxy-L-arabinose (UDP-L-Ara4N) to form UDP-L-4-formamido-arabinose (UDP-L-Ara4FN). The modified arabinose is attached to lipid A and is required for resistance to polymyxin and cationic antimicrobial peptides. The protein is Bifunctional polymyxin resistance protein ArnA of Salmonella heidelberg (strain SL476).